The primary structure comprises 421 residues: Histidine--tRNA ligase (421 aa).

Belongs to the class-II aminoacyl-tRNA synthetase family. Homodimer.

The protein resides in the cytoplasm. The enzyme catalyses tRNA(His) + L-histidine + ATP = L-histidyl-tRNA(His) + AMP + diphosphate + H(+). This is Histidine--tRNA ligase from Coxiella burnetii (strain CbuK_Q154) (Coxiella burnetii (strain Q154)).